The following is a 159-amino-acid chain: RNA pyrophosphohydrolase (159 aa).

Residues 6-149 enclose the Nudix hydrolase domain; it reads GFRPNVGIIL…KREVYRRALK (144 aa). Positions 38–59 match the Nudix box motif; sequence GGINPDETPEDALYRELNEEVG.

Belongs to the Nudix hydrolase family. RppH subfamily. Requires a divalent metal cation as cofactor.

In terms of biological role, accelerates the degradation of transcripts by removing pyrophosphate from the 5'-end of triphosphorylated RNA, leading to a more labile monophosphorylated state that can stimulate subsequent ribonuclease cleavage. This Pseudomonas putida (strain ATCC 700007 / DSM 6899 / JCM 31910 / BCRC 17059 / LMG 24140 / F1) protein is RNA pyrophosphohydrolase.